We begin with the raw amino-acid sequence, 764 residues long: Semaphorin-3D (764 aa).

The first 41 residues, 1 to 41 (MKTAGEPDRRRQRRQVRTGRFSCAWWSTSVMLFFSLPEGNC), serve as a signal peptide directing secretion. The 488-residue stretch at 48–535 (RVKLGYKDLI…GSDGLVQVSL (488 aa)) folds into the Sema domain. A disulfide bond links cysteine 121 and cysteine 132. N-linked (GlcNAc...) asparagine glycosylation occurs at asparagine 143. 3 cysteine pairs are disulfide-bonded: cysteine 150/cysteine 159, cysteine 290/cysteine 402, and cysteine 314/cysteine 362. N-linked (GlcNAc...) asparagine glycosylation occurs at asparagine 490. The cysteines at positions 538 and 556 are disulfide-linked. N-linked (GlcNAc...) asparagine glycosylation occurs at asparagine 610. The 80-residue stretch at 661 to 740 (GDAGSYFCTS…EYCETMWHRE (80 aa)) folds into the Ig-like C2-type domain. Cysteine 668 and cysteine 733 are oxidised to a cystine. Positions 743 to 764 (QKQKGKWKHVQELRKSRNRRHH) are disordered.

The protein belongs to the semaphorin family.

Its subcellular location is the secreted. Its function is as follows. May play a role in the guidance of several axon pathways. The polypeptide is Semaphorin-3D (sema3d) (Danio rerio (Zebrafish)).